The chain runs to 249 residues: Probable endopeptidase YafL (249 aa).

The first 17 residues, 1–17 (MSLPSIPSFVLSGLLLI), serve as a signal peptide directing secretion. Cys-18 carries the N-palmitoyl cysteine lipid modification. A lipid anchor (S-diacylglycerol cysteine) is attached at Cys-18. Residues 116–243 (HNITEVAIHR…DHFLGARRIL (128 aa)) enclose the NlpC/P60 domain. The Nucleophile role is filled by Cys-147. Residue His-202 is the Proton acceptor of the active site. Glu-214 is an active-site residue.

It belongs to the peptidase C40 family.

The protein resides in the cell membrane. The protein is Probable endopeptidase YafL (yafL) of Escherichia coli (strain K12).